Consider the following 162-residue polypeptide: 2-C-methyl-D-erythritol 2,4-cyclodiphosphate synthase (162 aa).

Residues Asp-12 and His-14 each coordinate a divalent metal cation. Residues 12–14 and 38–39 contribute to the 4-CDP-2-C-methyl-D-erythritol 2-phosphate site; these read DVH and HS. His-46 provides a ligand contact to a divalent metal cation. Residues 60–62, 65–69, and Arg-146 each bind 4-CDP-2-C-methyl-D-erythritol 2-phosphate; these read DIG and FPDTD.

It belongs to the IspF family. As to quaternary structure, homotrimer. A divalent metal cation serves as cofactor.

The catalysed reaction is 4-CDP-2-C-methyl-D-erythritol 2-phosphate = 2-C-methyl-D-erythritol 2,4-cyclic diphosphate + CMP. It functions in the pathway isoprenoid biosynthesis; isopentenyl diphosphate biosynthesis via DXP pathway; isopentenyl diphosphate from 1-deoxy-D-xylulose 5-phosphate: step 4/6. Functionally, involved in the biosynthesis of isopentenyl diphosphate (IPP) and dimethylallyl diphosphate (DMAPP), two major building blocks of isoprenoid compounds. Catalyzes the conversion of 4-diphosphocytidyl-2-C-methyl-D-erythritol 2-phosphate (CDP-ME2P) to 2-C-methyl-D-erythritol 2,4-cyclodiphosphate (ME-CPP) with a corresponding release of cytidine 5-monophosphate (CMP). The protein is 2-C-methyl-D-erythritol 2,4-cyclodiphosphate synthase of Bordetella bronchiseptica (strain ATCC BAA-588 / NCTC 13252 / RB50) (Alcaligenes bronchisepticus).